The primary structure comprises 330 residues: L-asparaginase (330 aa).

The region spanning 4 to 330 (PQVTILATGG…EAIQKIFSTY (327 aa)) is the Asparaginase/glutaminase domain. Thr14 acts as the O-isoaspartyl threonine intermediate in catalysis. Substrate is bound at residue 93 to 94 (TD).

It belongs to the asparaginase 1 family. Homotetramer.

The protein resides in the cytoplasm. It carries out the reaction L-asparagine + H2O = L-aspartate + NH4(+). This is L-asparaginase (ansA) from Wolinella succinogenes (strain ATCC 29543 / DSM 1740 / CCUG 13145 / JCM 31913 / LMG 7466 / NCTC 11488 / FDC 602W) (Vibrio succinogenes).